Here is a 367-residue protein sequence, read N- to C-terminus: Protein RecA (367 aa).

73–80 is an ATP binding site; the sequence is GPESSGKT. Residues 345-367 are disordered; it reads DEPVAKKASAKESKEAKELKEVE.

It belongs to the RecA family.

The protein resides in the cytoplasm. Functionally, can catalyze the hydrolysis of ATP in the presence of single-stranded DNA, the ATP-dependent uptake of single-stranded DNA by duplex DNA, and the ATP-dependent hybridization of homologous single-stranded DNAs. It interacts with LexA causing its activation and leading to its autocatalytic cleavage. This chain is Protein RecA, found in Herminiimonas arsenicoxydans.